The chain runs to 392 residues: Succinyl-diaminopimelate desuccinylase (392 aa).

His-71 provides a ligand contact to Zn(2+). Residue Asp-73 is part of the active site. A Zn(2+)-binding site is contributed by Asp-102. The active-site Proton acceptor is Glu-144. Zn(2+)-binding residues include Glu-145, Glu-173, and His-362.

The protein belongs to the peptidase M20A family. DapE subfamily. As to quaternary structure, homodimer. Zn(2+) is required as a cofactor. Co(2+) serves as cofactor.

It catalyses the reaction N-succinyl-(2S,6S)-2,6-diaminopimelate + H2O = (2S,6S)-2,6-diaminopimelate + succinate. It functions in the pathway amino-acid biosynthesis; L-lysine biosynthesis via DAP pathway; LL-2,6-diaminopimelate from (S)-tetrahydrodipicolinate (succinylase route): step 3/3. Its function is as follows. Catalyzes the hydrolysis of N-succinyl-L,L-diaminopimelic acid (SDAP), forming succinate and LL-2,6-diaminopimelate (DAP), an intermediate involved in the bacterial biosynthesis of lysine and meso-diaminopimelic acid, an essential component of bacterial cell walls. The sequence is that of Succinyl-diaminopimelate desuccinylase from Rhodospirillum rubrum (strain ATCC 11170 / ATH 1.1.1 / DSM 467 / LMG 4362 / NCIMB 8255 / S1).